The following is a 445-amino-acid chain: GTPase Der (445 aa).

EngA-type G domains are found at residues 3-167 (PVIA…YAGQ) and 180-353 (VKIA…AAAM). GTP is bound by residues 9-16 (GRPNVGKS), 56-60 (DTGGF), 119-122 (NKAE), 186-193 (GRPNVGKS), 233-237 (DTAGL), and 298-301 (NKWD). One can recognise a KH-like domain in the interval 354-438 (AKLPTPKLTR…PLRIEFRSST (85 aa)).

The protein belongs to the TRAFAC class TrmE-Era-EngA-EngB-Septin-like GTPase superfamily. EngA (Der) GTPase family. In terms of assembly, associates with the 50S ribosomal subunit.

Functionally, GTPase that plays an essential role in the late steps of ribosome biogenesis. In Paraburkholderia xenovorans (strain LB400), this protein is GTPase Der.